Consider the following 404-residue polypeptide: Tryptophan synthase beta chain (404 aa).

Lys98 carries the post-translational modification N6-(pyridoxal phosphate)lysine.

The protein belongs to the TrpB family. In terms of assembly, tetramer of two alpha and two beta chains. It depends on pyridoxal 5'-phosphate as a cofactor.

The enzyme catalyses (1S,2R)-1-C-(indol-3-yl)glycerol 3-phosphate + L-serine = D-glyceraldehyde 3-phosphate + L-tryptophan + H2O. It participates in amino-acid biosynthesis; L-tryptophan biosynthesis; L-tryptophan from chorismate: step 5/5. Functionally, the beta subunit is responsible for the synthesis of L-tryptophan from indole and L-serine. This Rhodopseudomonas palustris (strain BisB5) protein is Tryptophan synthase beta chain.